Reading from the N-terminus, the 1733-residue chain is Polyketide synthase Pks13 (1733 aa).

The Carrier 1 domain occupies 17-95 (ELTVPEMRQW…SLATRIIEGE (79 aa)). An O-(pantetheine 4'-phosphoryl)serine modification is found at S55. A Ketosynthase family 3 (KS3) domain is found at 116–541 (RVDIAIVGLS…GANAHVVVRE (426 aa)). Residue C287 is the Acyl-thioester intermediate; for beta-ketoacyl synthase activity of the active site. Active-site for beta-ketoacyl synthase activity residues include H423 and H463. Over residues 548–560 (VEKEPEPEPEPKA) the composition is skewed to basic and acidic residues. Positions 548–567 (VEKEPEPEPEPKAAAEPAEA) are disordered. The segment at 713–1034 (VWVLAGFGAQ…MVSTMAQLYV (322 aa)) is acyltransferase. Catalysis depends on S801, which acts as the Acyl-ester intermediate; for acyltransferase activity. The region spanning 1232–1309 (ETIAERLGLI…KLIEYAVEHR (78 aa)) is the Carrier 2 domain. The residue at position 1266 (S1266) is an O-(pantetheine 4'-phosphoryl)serine. The disordered stretch occupies residues 1344-1368 (PVDSEAGVALPSPQNGEQPNPTGPA). The interval 1470–1563 (PVFVFHPAGG…RFVGLIDAVR (94 aa)) is thioesterase-like. S1533 functions as the For thioesterase-like activity in the catalytic mechanism.

4'-phosphopantetheine is transferred from CoA to specific serines of apo-Pks13 by PptT.

The protein operates within lipid metabolism; mycolic acid biosynthesis. The presence of FadD32 is necessary for the transfer of the acyl chain from the AMP carrier onto Pks13. Its function is as follows. Involved in the biosynthesis of mycolic acids. Forms, with FadD32, the initiation module of the mycolic condensation system. Synthesizes, in coupled reaction with FadD32, the biosynthetic precursors of mycolic acids, alpha-alkyl beta-ketoacids, via the condensation of two long chain fatty acid derivatives, a very long meromycoloyl-AMP and a shorter 2-carboxyacyl-CoA. The acyl chain of the acyl-AMP produced by FadD32 is specifically transferred onto the N-terminal ACP domain of Pks13, and then transferred onto the KS domain. The extender unit carboxyacyl-CoA is specifically loaded onto the AT domain, which catalyzes the covalent attachment of the carboxyacyl chain to its active site, and its subsequent transfer onto the P-pant arm of the C-terminal ACP domain. The KS domain catalyzes the condensation between the two loaded fatty acyl chains to produce an alpha-alkyl beta-ketothioester linked to the C-ACP domain. Then, the thioesterase-like domain acts as a transacylase and is responsible for both the release and the transfer of the alpha-alkyl beta-ketoacyl chain onto a polyol acceptor molecule, particularly trehalose, leading to the formation of the trehalose monomycolate precursor. In Mycobacterium tuberculosis (strain ATCC 25618 / H37Rv), this protein is Polyketide synthase Pks13.